A 4042-amino-acid polypeptide reads, in one-letter code: Polyketide synthase-nonribosomal peptide synthetase phmA (4042 aa).

The Ketosynthase family 3 (KS3) domain occupies 10–411; that stretch reads NEPIAIVGSA…GANAHAILEA (402 aa). The acyl transferase stretch occupies residues 519–837; the sequence is VFTGQGAQWA…TGLLSRDRDD (319 aa). Residues 909–1042 are N-terminal hotdog fold; it reads HELLGTKCPD…GRISALFGPP (134 aa). The dehydratase (DH) domain stretch occupies residues 909–1208; sequence HELLGTKCPD…LHTKPLGHAT (300 aa). A PKS/mFAS DH domain is found at 909-1210; it reads HELLGTKCPD…TKPLGHATPE (302 aa). Catalysis depends on His941, which acts as the Proton acceptor; for dehydratase activity. The C-terminal hotdog fold stretch occupies residues 1057-1210; the sequence is MIDVDPEQFY…TKPLGHATPE (154 aa). Asp1117 functions as the Proton donor; for dehydratase activity in the catalytic mechanism. The tract at residues 1349-1572 is methyltransferase (MT) domain; the sequence is DDMLNDFYVK…VDEHVEFIRN (224 aa). Positions 2073–2246 are ketoreductase (KR)domain; it reads TYWLVGLTGG…AGSVINIGAI (174 aa). The 83-residue stretch at 2351–2433 folds into the Carrier 1 domain; the sequence is ATTADEVNEA…ELVSAAQEQL (83 aa). Residue Ser2393 is modified to O-(pantetheine 4'-phosphoryl)serine. Disordered stretches follow at residues 2460–2504 and 2535–2554; these read KTET…SKDA and ATRS…PEND. Positions 2479–2490 are enriched in acidic residues; sequence EVDEEEQEEDEA. Residues 2495 to 2504 show a composition bias toward polar residues; it reads NFFSSASKDA. Low complexity predominate over residues 2536-2549; that stretch reads TRSKTSSSSSSFTS. A condensation region spans residues 2584–3019; that stretch reads RVSPMSFGQA…LGRPPLYDPQ (436 aa). The segment at 3047-3443 is adenylation; it reads EMASRFGSQI…TADGLVLEGR (397 aa). The region spanning 3562-3642 is the Carrier 2 domain; the sequence is KENKSPESEL…AMLNLISPAS (81 aa). Ser3602 is modified (O-(pantetheine 4'-phosphoryl)serine). The segment at 3703 to 3924 is reductase-like; sequence ITGASGFLGK…DFVSVESVAH (222 aa).

It belongs to the NRP synthetase family.

It participates in mycotoxin biosynthesis. Functionally, hybrid PKS-NRPS synthetase; part of the gene cluster that mediates the biosynthesis of the mycotoxins phomacins, leucine-derived cytochalasans with potent actin polymerization-inhibitory activities and monocot-specific antigerminative activities. The first step in the pathway is catalyzed by the hybrid PKS-NRPS phmA, assisted by the enoyl reductase phmE, that are responsible for fusion of the leucine precursor and the polyketide backbone to produce a 2-pyrrolidone intermediate. The polyketide synthase module (PKS) of phmA is responsible for the synthesis of the polyketide backbone and the downstream nonribosomal peptide synthetase (NRPS) amidates the carboxyl end of the polyketide with the leucine precursor. Because phmA lacks a designated enoylreductase (ER) domain, the required activity is provided the enoyl reductase phmE. Reduction by the hydrolyase phmG, followed by dehydration and intra-molecular Diels-Alder cyclization by the Diels-Alderase phmD then yield the required isoindolone-fused macrocycle. A number of oxidative steps catalyzed by the tailoring cytochrome P450 monooxygenase phmB, the FAD-linked oxidoreductase phmC and the short-chain dehydrogenase/reductase phmF, are further required to afford the final products, phomacin D and phomacin E. The protein is Polyketide synthase-nonribosomal peptide synthetase phmA of Phaeosphaeria nodorum (strain SN15 / ATCC MYA-4574 / FGSC 10173) (Glume blotch fungus).